A 576-amino-acid chain; its full sequence is Proline--tRNA ligase (576 aa).

This sequence belongs to the class-II aminoacyl-tRNA synthetase family. ProS type 1 subfamily. In terms of assembly, homodimer.

The protein localises to the cytoplasm. It carries out the reaction tRNA(Pro) + L-proline + ATP = L-prolyl-tRNA(Pro) + AMP + diphosphate. Its function is as follows. Catalyzes the attachment of proline to tRNA(Pro) in a two-step reaction: proline is first activated by ATP to form Pro-AMP and then transferred to the acceptor end of tRNA(Pro). As ProRS can inadvertently accommodate and process non-cognate amino acids such as alanine and cysteine, to avoid such errors it has two additional distinct editing activities against alanine. One activity is designated as 'pretransfer' editing and involves the tRNA(Pro)-independent hydrolysis of activated Ala-AMP. The other activity is designated 'posttransfer' editing and involves deacylation of mischarged Ala-tRNA(Pro). The misacylated Cys-tRNA(Pro) is not edited by ProRS. This chain is Proline--tRNA ligase, found in Trichlorobacter lovleyi (strain ATCC BAA-1151 / DSM 17278 / SZ) (Geobacter lovleyi).